The chain runs to 317 residues: Cell division protein FtsX (317 aa).

The Cytoplasmic portion of the chain corresponds to 1-39; sequence MAIVRHKQPPLRRFMMYWVDHARQAFSSLGELWRNPLAS. Residues 40–60 traverse the membrane as a helical segment; it reads LMTLAVLGVSLALPSCFHVLL. Topologically, residues 61–188 are periplasmic; it reads KNAEVVEGSW…LQGIMNLLRH (128 aa). A helical transmembrane segment spans residues 189-209; sequence TITGIAVLLLSAVLLIVGNTL. Topologically, residues 210 to 241 are cytoplasmic; the sequence is RLNILNQRSEIEVLKLVGATDAFIHRPFLYTG. A helical membrane pass occupies residues 242 to 262; it reads IWFGVIGGMLAWWLTEVMVIW. Residues 263-280 are Periplasmic-facing; sequence SEGVVNELAGLYNSNFRL. A helical transmembrane segment spans residues 281–301; sequence VGMGAVDGINLILLGALLGLI. Over 302 to 317 the chain is Cytoplasmic; that stretch reads ASWFSVHRHIRDIEPS.

Belongs to the ABC-4 integral membrane protein family. FtsX subfamily. As to quaternary structure, forms a membrane-associated complex with FtsE.

It is found in the cell inner membrane. Part of the ABC transporter FtsEX involved in cellular division. Encoded in an operon consisting of genes ftsY, ftsE and ftsX. This chain is Cell division protein FtsX, found in Aeromonas hydrophila.